The following is a 221-amino-acid chain: Ependymin (221 aa).

A signal peptide spans 1–21 (MQAFAVAALSIWLCLGATTLA). Residues Asn-37, Asn-77, and Asn-101 are each glycosylated (N-linked (GlcNAc...) asparagine).

Belongs to the ependymin family. Forms disulfide-linked dimers. Post-translationally, binds calcium through the terminal sialic acids. EPDs are synthesized in the meninx and secreted in the cerebrospinal fluid.

It localises to the secreted. May play a role in neural plasticity. May be involved during axon regeneration. The chain is Ependymin (epd) from Esox lucius (Northern pike).